A 434-amino-acid chain; its full sequence is Enolase 2 (434 aa).

Gln171 serves as a coordination point for (2R)-2-phosphoglycerate. Glu213 functions as the Proton donor in the catalytic mechanism. Positions 250, 293, and 320 each coordinate Mg(2+). Residues Lys345, Arg374, Ser375, and Lys396 each contribute to the (2R)-2-phosphoglycerate site. Lys345 functions as the Proton acceptor in the catalytic mechanism.

The protein belongs to the enolase family. Mg(2+) serves as cofactor.

It localises to the cytoplasm. The protein resides in the secreted. Its subcellular location is the cell surface. The enzyme catalyses (2R)-2-phosphoglycerate = phosphoenolpyruvate + H2O. It functions in the pathway carbohydrate degradation; glycolysis; pyruvate from D-glyceraldehyde 3-phosphate: step 4/5. Functionally, catalyzes the reversible conversion of 2-phosphoglycerate (2-PG) into phosphoenolpyruvate (PEP). It is essential for the degradation of carbohydrates via glycolysis. In Streptomyces coelicolor (strain ATCC BAA-471 / A3(2) / M145), this protein is Enolase 2.